The following is a 114-amino-acid chain: Large ribosomal subunit protein eL31 (114 aa).

It belongs to the eukaryotic ribosomal protein eL31 family.

This is Large ribosomal subunit protein eL31 (RPL31) from Eremothecium gossypii (strain ATCC 10895 / CBS 109.51 / FGSC 9923 / NRRL Y-1056) (Yeast).